A 227-amino-acid polypeptide reads, in one-letter code: Germin-like protein 3-3 (227 aa).

Residues 1–26 form the signal peptide; sequence MECFKTTLAGVVLVVLLLQQAPVLRA. The cysteines at positions 36 and 51 are disulfide-linked. One can recognise a Cupin type-1 domain in the interval 65 to 217; it reads SRLATGGDVN…ALRVDAGVVE (153 aa). Residues N78 and N81 are each glycosylated (N-linked (GlcNAc...) asparagine). Positions 114, 116, 121, and 163 each coordinate Mn(2+).

Belongs to the germin family. Oligomer (believed to be a pentamer but probably hexamer).

It is found in the secreted. The protein localises to the extracellular space. The protein resides in the apoplast. Functionally, may play a role in plant defense. Probably has no oxalate oxidase activity even if the active site is conserved. This Oryza sativa subsp. japonica (Rice) protein is Germin-like protein 3-3.